We begin with the raw amino-acid sequence, 300 residues long: Pantoate--beta-alanine ligase (300 aa).

43–50 (MGYLHSGH) is a binding site for ATP. Catalysis depends on H50, which acts as the Proton donor. A (R)-pantoate-binding site is contributed by Q74. Q74 is a beta-alanine binding site. 162–165 (GQKD) is a binding site for ATP. Q168 is a binding site for (R)-pantoate. ATP-binding positions include I191 and 199–202 (KSSR).

Belongs to the pantothenate synthetase family. In terms of assembly, homodimer.

The protein resides in the cytoplasm. The enzyme catalyses (R)-pantoate + beta-alanine + ATP = (R)-pantothenate + AMP + diphosphate + H(+). Its pathway is cofactor biosynthesis; (R)-pantothenate biosynthesis; (R)-pantothenate from (R)-pantoate and beta-alanine: step 1/1. Catalyzes the condensation of pantoate with beta-alanine in an ATP-dependent reaction via a pantoyl-adenylate intermediate. The sequence is that of Pantoate--beta-alanine ligase (panC) from Dictyostelium discoideum (Social amoeba).